A 164-amino-acid chain; its full sequence is Large ribosomal subunit protein bL9 (164 aa).

Belongs to the bacterial ribosomal protein bL9 family.

Its function is as follows. Binds to the 23S rRNA. This is Large ribosomal subunit protein bL9 from Borrelia hermsii (strain HS1 / DAH).